Consider the following 483-residue polypeptide: Glutamyl-tRNA(Gln) amidotransferase subunit A (483 aa).

Residues Lys-76 and Ser-151 each act as charge relay system in the active site. Catalysis depends on Ser-175, which acts as the Acyl-ester intermediate.

Belongs to the amidase family. GatA subfamily. As to quaternary structure, heterotrimer of A, B and C subunits.

It carries out the reaction L-glutamyl-tRNA(Gln) + L-glutamine + ATP + H2O = L-glutaminyl-tRNA(Gln) + L-glutamate + ADP + phosphate + H(+). Functionally, allows the formation of correctly charged Gln-tRNA(Gln) through the transamidation of misacylated Glu-tRNA(Gln) in organisms which lack glutaminyl-tRNA synthetase. The reaction takes place in the presence of glutamine and ATP through an activated gamma-phospho-Glu-tRNA(Gln). The protein is Glutamyl-tRNA(Gln) amidotransferase subunit A of Pseudomonas savastanoi pv. phaseolicola (strain 1448A / Race 6) (Pseudomonas syringae pv. phaseolicola (strain 1448A / Race 6)).